The following is a 396-amino-acid chain: S-adenosylmethionine synthase (396 aa).

An ATP-binding site is contributed by histidine 14. Aspartate 16 is a binding site for Mg(2+). Glutamate 42 provides a ligand contact to K(+). L-methionine contacts are provided by glutamate 55 and glutamine 98. Positions 98–108 are flexible loop; the sequence is QSPDIAQGVHG. ATP contacts are provided by residues 167–169, 234–235, aspartate 243, 249–250, serine 266, and lysine 270; these read DAK, RF, and RK. Aspartate 243 contributes to the L-methionine binding site. Lysine 274 provides a ligand contact to L-methionine.

This sequence belongs to the AdoMet synthase family. Homotetramer; dimer of dimers. Mg(2+) is required as a cofactor. It depends on K(+) as a cofactor.

It is found in the cytoplasm. The catalysed reaction is L-methionine + ATP + H2O = S-adenosyl-L-methionine + phosphate + diphosphate. The protein operates within amino-acid biosynthesis; S-adenosyl-L-methionine biosynthesis; S-adenosyl-L-methionine from L-methionine: step 1/1. Catalyzes the formation of S-adenosylmethionine (AdoMet) from methionine and ATP. The overall synthetic reaction is composed of two sequential steps, AdoMet formation and the subsequent tripolyphosphate hydrolysis which occurs prior to release of AdoMet from the enzyme. The protein is S-adenosylmethionine synthase of Treponema pallidum (strain Nichols).